The primary structure comprises 398 residues: Probable pectate lyase P56 (398 aa).

Positions 1–27 are cleaved as a signal peptide; it reads MEYSYRTKINVLFIVLILFVFAALGTA. Asn135 is a glycosylation site (N-linked (GlcNAc...) asparagine). The Ca(2+) site is built by Asp192, Asp217, and Asp221. Asn228 carries N-linked (GlcNAc...) asparagine glycosylation. Residue Arg273 is part of the active site.

This sequence belongs to the polysaccharide lyase 1 family. The cofactor is Ca(2+). As to expression, expressed in anthers and pollen.

It carries out the reaction Eliminative cleavage of (1-&gt;4)-alpha-D-galacturonan to give oligosaccharides with 4-deoxy-alpha-D-galact-4-enuronosyl groups at their non-reducing ends.. It participates in glycan metabolism; pectin degradation; 2-dehydro-3-deoxy-D-gluconate from pectin: step 2/5. Its function is as follows. Might be needed during pollen development and tube growth. This chain is Probable pectate lyase P56 (LAT56), found in Solanum lycopersicum (Tomato).